A 120-amino-acid chain; its full sequence is Prefoldin subunit beta (120 aa).

Belongs to the prefoldin subunit beta family. Heterohexamer of two alpha and four beta subunits.

It is found in the cytoplasm. In terms of biological role, molecular chaperone capable of stabilizing a range of proteins. Seems to fulfill an ATP-independent, HSP70-like function in archaeal de novo protein folding. This chain is Prefoldin subunit beta, found in Methanospirillum hungatei JF-1 (strain ATCC 27890 / DSM 864 / NBRC 100397 / JF-1).